Here is a 234-residue protein sequence, read N- to C-terminus: N-acetyl-alpha-D-glucosaminyl L-malate deacetylase 1 (234 aa).

Residues His12, Asp15, and His113 each contribute to the Zn(2+) site.

The protein belongs to the PIGL family. It depends on Zn(2+) as a cofactor.

It carries out the reaction (S)-malyl N-acetyl-alpha-D-glucosaminide + H2O = (S)-malyl alpha-D-glucosaminide + acetate. Inhibited by BSH. Involved in bacillithiol (BSH) biosynthesis. Catalyzes the second step of the pathway, the deacetylation of N-acetylglucosaminylmalate (GlcNAc-Mal) to glucosamine malate (GlcN-Mal). The polypeptide is N-acetyl-alpha-D-glucosaminyl L-malate deacetylase 1 (Bacillus anthracis).